Reading from the N-terminus, the 188-residue chain is Peptidyl-tRNA hydrolase (188 aa).

Tyr-14 provides a ligand contact to tRNA. The active-site Proton acceptor is His-19. TRNA is bound by residues Tyr-64, Asn-66, and Asn-112.

Belongs to the PTH family. In terms of assembly, monomer.

The protein resides in the cytoplasm. It carries out the reaction an N-acyl-L-alpha-aminoacyl-tRNA + H2O = an N-acyl-L-amino acid + a tRNA + H(+). In terms of biological role, hydrolyzes ribosome-free peptidyl-tRNAs (with 1 or more amino acids incorporated), which drop off the ribosome during protein synthesis, or as a result of ribosome stalling. Functionally, catalyzes the release of premature peptidyl moieties from peptidyl-tRNA molecules trapped in stalled 50S ribosomal subunits, and thus maintains levels of free tRNAs and 50S ribosomes. Releases Ala-tailed nascent peptides from stalled 50S ribosomal subunits. Non-templated Ala tailing occurs as part of the ribosome quality control (RQC) pathway. In the absence of Ala tails significantly less peptide release occurs. The Ala tail facilitates the interaction of Pth with the nascent peptide-tRNA ester bond as well as promoting nascent chain degradation; 3 Ala residues suffice to stimulate peptide release from stalled 50S ribosomal subunits. Complements a temperature-sensitive pth mutation in E.coli. This is Peptidyl-tRNA hydrolase from Bacillus subtilis (strain 168).